Consider the following 135-residue polypeptide: uncharacterized protein (135 aa).

This sequence belongs to the asp23 family.

This is an uncharacterized protein from Bacillus subtilis (strain 168).